The chain runs to 498 residues: ADP,ATP carrier protein 1 (498 aa).

Residues Met1–Phe33 are Cytoplasmic-facing. A helical membrane pass occupies residues Met34–Val54. The cysteines at positions 37 and 85 are disulfide-linked. Residues Thr55–Thr67 are Extracellular-facing. A helical transmembrane segment spans residues Tyr68–Leu88. Residues Lys89–Asn92 are Cytoplasmic-facing. A helical transmembrane segment spans residues Val93–Tyr113. The Extracellular portion of the chain corresponds to Pro114–Ser147. Residues Phe148–Trp168 traverse the membrane as a helical segment. Residues Gln169 to Tyr184 are Cytoplasmic-facing. The chain crosses the membrane as a helical span at residues Ser185–Phe205. Residues Leu206–Lys218 are Extracellular-facing. The helical transmembrane segment at Phe219 to Trp239 threads the bilayer. Over Met240–Tyr279 the chain is Cytoplasmic. A helical transmembrane segment spans residues Val280–Val300. The Extracellular portion of the chain corresponds to Trp301 to Gly320. A helical membrane pass occupies residues Gln321–Leu341. The Cytoplasmic segment spans residues Arg342–Thr348. A helical transmembrane segment spans residues Ala349–Phe369. Residues Phe370–Thr379 are Extracellular-facing. A helical membrane pass occupies residues Gly380–Leu400. The Cytoplasmic portion of the chain corresponds to Ser401 to Arg438. Residue Gly436–Ser442 participates in ATP binding. Residues Leu439–Gly459 traverse the membrane as a helical segment. Residues Phe460–Pro465 are Extracellular-facing. Residues Tyr466–Asn486 form a helical membrane-spanning segment. The Cytoplasmic portion of the chain corresponds to Lys487–Lys498.

This sequence belongs to the ADP/ATP translocase tlc family.

Its subcellular location is the cell membrane. In terms of biological role, provides the rickettsial cell with host ATP in exchange for rickettsial ADP. This is an obligate exchange system. This energy acquiring activity is an important component of rickettsial parasitism. This chain is ADP,ATP carrier protein 1 (tlcA), found in Rickettsia prowazekii (strain Madrid E).